The following is a 679-amino-acid chain: Penicillin-binding protein 1A (679 aa).

Residues 1–14 show a composition bias toward basic residues; sequence MTERKREHKDRKQN. The disordered stretch occupies residues 1 to 20; it reads MTERKREHKDRKQNKNSPKN. Residues 1-30 lie on the Cytoplasmic side of the membrane; the sequence is MTERKREHKDRKQNKNSPKNQSKVTKFLKW. Residues 31 to 51 form a helical; Signal-anchor for type II membrane protein membrane-spanning segment; it reads FFIGILLLGITAVTVVGIYVL. At 52–679 the chain is on the extracellular side; that stretch reads SIIRSSPELD…QYKEVDNLVE (628 aa). The interval 72-244 is transglycosylase; that stretch reads SILYDDQGNF…PTSYDGLSEA (173 aa). The active-site Proton donor; for transglycosylase activity is E111. The transpeptidase stretch occupies residues 378 to 663; the sequence is ASATIIDYKT…TSPIFGKIMG (286 aa). S417 acts as the Acyl-ester intermediate; for transpeptidase activity in catalysis.

In the N-terminal section; belongs to the glycosyltransferase 51 family. The protein in the C-terminal section; belongs to the transpeptidase family.

The protein resides in the cell membrane. It carries out the reaction [GlcNAc-(1-&gt;4)-Mur2Ac(oyl-L-Ala-gamma-D-Glu-L-Lys-D-Ala-D-Ala)](n)-di-trans,octa-cis-undecaprenyl diphosphate + beta-D-GlcNAc-(1-&gt;4)-Mur2Ac(oyl-L-Ala-gamma-D-Glu-L-Lys-D-Ala-D-Ala)-di-trans,octa-cis-undecaprenyl diphosphate = [GlcNAc-(1-&gt;4)-Mur2Ac(oyl-L-Ala-gamma-D-Glu-L-Lys-D-Ala-D-Ala)](n+1)-di-trans,octa-cis-undecaprenyl diphosphate + di-trans,octa-cis-undecaprenyl diphosphate + H(+). The enzyme catalyses Preferential cleavage: (Ac)2-L-Lys-D-Ala-|-D-Ala. Also transpeptidation of peptidyl-alanyl moieties that are N-acyl substituents of D-alanine.. It participates in cell wall biogenesis; peptidoglycan biosynthesis. In terms of biological role, cell wall formation. Synthesis of cross-linked peptidoglycan from the lipid intermediates. The enzyme has a penicillin-insensitive transglycosylase N-terminal domain (formation of linear glycan strands) and a penicillin-sensitive transpeptidase C-terminal domain (cross-linking of the peptide subunits). This is Penicillin-binding protein 1A (pbpA) from Clostridium perfringens (strain 13 / Type A).